Consider the following 484-residue polypeptide: ATP synthase subunit beta (484 aa).

Position 162–169 (162–169 (GGAGVGKT)) interacts with ATP.

This sequence belongs to the ATPase alpha/beta chains family. F-type ATPases have 2 components, CF(1) - the catalytic core - and CF(0) - the membrane proton channel. CF(1) has five subunits: alpha(3), beta(3), gamma(1), delta(1), epsilon(1). CF(0) has four main subunits: a(1), b(1), b'(1) and c(9-12).

It is found in the cellular thylakoid membrane. The catalysed reaction is ATP + H2O + 4 H(+)(in) = ADP + phosphate + 5 H(+)(out). Produces ATP from ADP in the presence of a proton gradient across the membrane. The catalytic sites are hosted primarily by the beta subunits. The polypeptide is ATP synthase subunit beta (Trichodesmium erythraeum (strain IMS101)).